The primary structure comprises 486 residues: Alliin lyase 1 (486 aa).

The N-terminal stretch at 1 to 28 (MVESYKKIGSCNKMPCLVILTCIIMSNS) is a signal peptide. Residues 29-38 (LVNNNNMVQA) constitute a propeptide that is removed on maturation. The EGF-like; atypical domain occupies 51-97 (EAVANINCSEHGRAFLDGIISEGSPKCECNTCYTGPDCSEKIQGCSA). A glycan (N-linked (GlcNAc...) asparagine) is linked at Asn57. Intrachain disulfides connect Cys58–Cys77, Cys79–Cys88, and Cys82–Cys95. 130-138 (YFFNPVSNF) lines the chloride pocket. 2 N-linked (GlcNAc...) asparagine glycosylation sites follow: Asn184 and Asn229. N6-(pyridoxal phosphate)lysine is present on Lys289. Residue Asn366 is glycosylated (N-linked (GlcNAc...) asparagine). A disulfide bond links Cys406 and Cys414.

Belongs to the alliinase family. Homodimer. It depends on pyridoxal 5'-phosphate as a cofactor. Expressed in bulb (at protein level). Expressed in shoots.

The protein resides in the vacuole. It catalyses the reaction an S-alkyl-L-cysteine S-oxide = an S-alkyl sulfenate + 2-aminoprop-2-enoate. In terms of biological role, able to cleave the C-S bond of sulfoxide derivatives of Cys to produce allicin, thus giving rise to all sulfur compounds which are responsible for most of the properties of garlic, such as the specific smell and flavor as well as the health benefits like blood lipid or blood pressure lowering. In Allium sativum (Garlic), this protein is Alliin lyase 1.